Here is a 430-residue protein sequence, read N- to C-terminus: Phosphoribosylamine--glycine ligase (430 aa).

An ATP-grasp domain is found at 109–316; it reads KDFMARHGIP…LLDLIEAALN (208 aa). 135–196 contributes to the ATP binding site; that stretch reads VRQQGAPIVI…EEYLDGEEAS (62 aa). Mg(2+) contacts are provided by Glu286 and Asn288.

Belongs to the GARS family. It depends on Mg(2+) as a cofactor. The cofactor is Mn(2+).

It carries out the reaction 5-phospho-beta-D-ribosylamine + glycine + ATP = N(1)-(5-phospho-beta-D-ribosyl)glycinamide + ADP + phosphate + H(+). Its pathway is purine metabolism; IMP biosynthesis via de novo pathway; N(1)-(5-phospho-D-ribosyl)glycinamide from 5-phospho-alpha-D-ribose 1-diphosphate: step 2/2. The chain is Phosphoribosylamine--glycine ligase from Xylella fastidiosa (strain Temecula1 / ATCC 700964).